The primary structure comprises 606 residues: Probable methyltransferase PMT5 (606 aa).

Residues 1 to 20 (MRGSWYKSVSSVFGLRPRIR) lie on the Cytoplasmic side of the membrane. The chain crosses the membrane as a helical; Signal-anchor for type II membrane protein span at residues 21–41 (GLLFFIVGVVALVTILAPLTS). The Lumenal portion of the chain corresponds to 42–606 (NSYDSSSSST…LVCQKPFIKK (565 aa)). Asn-101 and Asn-409 each carry an N-linked (GlcNAc...) asparagine glycan.

The protein belongs to the methyltransferase superfamily.

The protein localises to the endoplasmic reticulum membrane. This chain is Probable methyltransferase PMT5, found in Arabidopsis thaliana (Mouse-ear cress).